The primary structure comprises 240 residues: Phosphoribosylaminoimidazole-succinocarboxamide synthase (240 aa).

It belongs to the SAICAR synthetase family.

The enzyme catalyses 5-amino-1-(5-phospho-D-ribosyl)imidazole-4-carboxylate + L-aspartate + ATP = (2S)-2-[5-amino-1-(5-phospho-beta-D-ribosyl)imidazole-4-carboxamido]succinate + ADP + phosphate + 2 H(+). It participates in purine metabolism; IMP biosynthesis via de novo pathway; 5-amino-1-(5-phospho-D-ribosyl)imidazole-4-carboxamide from 5-amino-1-(5-phospho-D-ribosyl)imidazole-4-carboxylate: step 1/2. The polypeptide is Phosphoribosylaminoimidazole-succinocarboxamide synthase (Anoxybacillus flavithermus (strain DSM 21510 / WK1)).